Here is a 219-residue protein sequence, read N- to C-terminus: Ran-binding protein 1 homolog c (219 aa).

Residues 1–11 (MASTEPERENR) are compositionally biased toward basic and acidic residues. 2 disordered regions span residues 1–30 (MAST…VAPI) and 160–219 (QVGK…EAST). Positions 12–23 (EDETEVNEDEDT) are enriched in acidic residues. The region spanning 26 to 161 (QVAPIVRLEE…FTEIAESQQV (136 aa)) is the RanBD1 domain. Residues 185-219 (SEEKAKEAEEKEPAKEDKETKKEKVEEEKKTEAST) show a composition bias toward basic and acidic residues.

Its subcellular location is the nucleus. The protein localises to the nuclear pore complex. This Arabidopsis thaliana (Mouse-ear cress) protein is Ran-binding protein 1 homolog c (RANBP1C).